Reading from the N-terminus, the 354-residue chain is Uroporphyrinogen decarboxylase (354 aa).

Substrate contacts are provided by residues Arg-27–Arg-31, Phe-46, Asp-77, Tyr-153, Thr-208, and His-326.

It belongs to the uroporphyrinogen decarboxylase family. As to quaternary structure, homodimer.

The protein resides in the cytoplasm. The catalysed reaction is uroporphyrinogen III + 4 H(+) = coproporphyrinogen III + 4 CO2. The protein operates within porphyrin-containing compound metabolism; protoporphyrin-IX biosynthesis; coproporphyrinogen-III from 5-aminolevulinate: step 4/4. Its function is as follows. Catalyzes the decarboxylation of four acetate groups of uroporphyrinogen-III to yield coproporphyrinogen-III. This chain is Uroporphyrinogen decarboxylase, found in Neisseria meningitidis serogroup B (strain ATCC BAA-335 / MC58).